The sequence spans 30 residues: Cyclotide cter-H (30 aa).

The segment at residues 1-30 is a cross-link (cyclopeptide (Gly-Asp)); it reads GLPCGESCVFIPCITTVVGCSCKNKVCYND. 3 disulfides stabilise this stretch: Cys4–Cys20, Cys8–Cys22, and Cys13–Cys27.

Contains 3 disulfide bonds. In terms of processing, this is a cyclic peptide.

Probably participates in a plant defense mechanism. In Clitoria ternatea (Butterfly pea), this protein is Cyclotide cter-H.